We begin with the raw amino-acid sequence, 349 residues long: Green-sensitive opsin-1 (349 aa).

Residues 1–36 (MNGTEGSNFYIPMSNRTGLVRSPYDYTQYYLAEPWK) lie on the Extracellular side of the membrane. Residues Asn-2 and Asn-15 are each glycosylated (N-linked (GlcNAc...) asparagine). Residues 37–61 (FKALAFYMFLLIIFGFPINVLTLVV) form a helical membrane-spanning segment. Topologically, residues 62-73 (TAQHKKLRQPLN) are cytoplasmic. A helical membrane pass occupies residues 74 to 99 (YILVNLAFAGTIMVIFGFTVSFYCSL). Residues 100-113 (VGYMALGPLGCVME) are Extracellular-facing. Residues Cys-110 and Cys-187 are joined by a disulfide bond. The helical transmembrane segment at 114–133 (GFFATLGGQVALWSLVVLAI) threads the bilayer. The Cytoplasmic segment spans residues 134 to 152 (ERYIVVCKPMGSFKFSANH). A helical transmembrane segment spans residues 153–176 (AMAGIAFTWFMACSCAVPPLFGWS). At 177-202 (RYLPEGMQTSCGPDYYTLNPEYNNES) the chain is on the extracellular side. Asn-200 carries N-linked (GlcNAc...) asparagine glycosylation. Residues 203–230 (YVMYMFSCHFCIPVTTIFFTYGSLVCTV) form a helical membrane-spanning segment. The Cytoplasmic segment spans residues 231–252 (KAAAAQQQESESTQKAEREVTR). Residues 253-276 (MVILMVLGFLFAWVPYASFAAWIF) form a helical membrane-spanning segment. Topologically, residues 277–284 (FNRGAAFS) are extracellular. A helical membrane pass occupies residues 285–309 (AQAMAVPAFFSKTSAVFNPIIYVLL). Lys-296 carries the N6-(retinylidene)lysine modification. The Cytoplasmic portion of the chain corresponds to 310-349 (NKQFRSCMLNTLFCGKSPLGDDESSSVSTSKTEVSSVSPA). The tract at residues 328-349 (LGDDESSSVSTSKTEVSSVSPA) is disordered. Low complexity predominate over residues 334 to 349 (SSVSTSKTEVSSVSPA).

This sequence belongs to the G-protein coupled receptor 1 family. Opsin subfamily. Phosphorylated on some or all of the serine and threonine residues present in the C-terminal region. In terms of tissue distribution, retinal double cone accessory photoreceptor cell outer segments.

Its subcellular location is the membrane. Functionally, visual pigments are the light-absorbing molecules that mediate vision. They consist of an apoprotein, opsin, covalently linked to cis-retinal. In Danio rerio (Zebrafish), this protein is Green-sensitive opsin-1 (opn1mw1).